Here is a 170-residue protein sequence, read N- to C-terminus: Ribosome maturation factor RimM (170 aa).

The PRC barrel domain maps to E96–L169.

This sequence belongs to the RimM family. Binds ribosomal protein uS19.

It is found in the cytoplasm. In terms of biological role, an accessory protein needed during the final step in the assembly of 30S ribosomal subunit, possibly for assembly of the head region. Essential for efficient processing of 16S rRNA. May be needed both before and after RbfA during the maturation of 16S rRNA. It has affinity for free ribosomal 30S subunits but not for 70S ribosomes. This is Ribosome maturation factor RimM from Sorangium cellulosum (strain So ce56) (Polyangium cellulosum (strain So ce56)).